The following is a 390-amino-acid chain: tRNA(Met) cytidine acetate ligase (390 aa).

ATP is bound by residues 7–20 (VVEY…HKLH), G101, N162, and R187.

This sequence belongs to the TmcAL family.

Its subcellular location is the cytoplasm. It carries out the reaction cytidine(34) in elongator tRNA(Met) + acetate + ATP = N(4)-acetylcytidine(34) in elongator tRNA(Met) + AMP + diphosphate. Catalyzes the formation of N(4)-acetylcytidine (ac(4)C) at the wobble position of elongator tRNA(Met), using acetate and ATP as substrates. First activates an acetate ion to form acetyladenylate (Ac-AMP) and then transfers the acetyl group to tRNA to form ac(4)C34. The polypeptide is tRNA(Met) cytidine acetate ligase (Listeria monocytogenes serotype 4b (strain F2365)).